Reading from the N-terminus, the 271-residue chain is Undecaprenyl-diphosphatase (271 aa).

Transmembrane regions (helical) follow at residues 5–25 (YALFVAFVLGIVEGLTEFLPV), 45–65 (AATFEVVIQMGSILAVVAVFW), 86–106 (TLSLVHIILGMLPAVIIGLAI), 114–134 (LFGPQTVMYALVAGGILLIIA), 149–169 (ISYKQALGIGLFQCLALWPGF), 189–209 (AAEFSFILAVPMMVAASGLDL), 226–246 (VGFITAFVVAMIAIKTFLALI), and 251–271 (FIPFAIYRFVVAFAVYLVFVA).

Belongs to the UppP family.

The protein localises to the cell inner membrane. It catalyses the reaction di-trans,octa-cis-undecaprenyl diphosphate + H2O = di-trans,octa-cis-undecaprenyl phosphate + phosphate + H(+). Its function is as follows. Catalyzes the dephosphorylation of undecaprenyl diphosphate (UPP). Confers resistance to bacitracin. In Aeromonas hydrophila subsp. hydrophila (strain ATCC 7966 / DSM 30187 / BCRC 13018 / CCUG 14551 / JCM 1027 / KCTC 2358 / NCIMB 9240 / NCTC 8049), this protein is Undecaprenyl-diphosphatase.